Here is a 608-residue protein sequence, read N- to C-terminus: Probable Ufm1-specific protease 2 (608 aa).

Catalysis depends on residues C441, D565, and H567.

This sequence belongs to the peptidase C78 family.

Thiol protease which recognizes and hydrolyzes the peptide bond at the C-terminal Gly of UFM1, a ubiquitin-like modifier protein bound to a number of target proteins. Does not hydrolyze SUMO1 or ISG15 ubiquitin-like proteins. The chain is Probable Ufm1-specific protease 2 from Drosophila pseudoobscura pseudoobscura (Fruit fly).